Consider the following 114-residue polypeptide: Fumarate reductase subunit D (114 aa).

3 consecutive transmembrane segments (helical) span residues 27 to 47, 50 to 70, and 94 to 114; these read ICFP…LVPV, IVAF…TIFP, and WVFY…VIAL.

It belongs to the FrdD family. In terms of assembly, part of an enzyme complex containing four subunits: a flavoprotein (FrdA), an iron-sulfur protein (FrdB), and two hydrophobic anchor proteins (FrdC and FrdD).

Its subcellular location is the cell inner membrane. In terms of biological role, anchors the catalytic components of the fumarate reductase complex to the cell membrane, binds quinones. This Actinobacillus pleuropneumoniae serotype 3 (strain JL03) protein is Fumarate reductase subunit D.